A 102-amino-acid chain; its full sequence is Small ribosomal subunit protein uS10 (102 aa).

This sequence belongs to the universal ribosomal protein uS10 family. As to quaternary structure, part of the 30S ribosomal subunit.

Functionally, involved in the binding of tRNA to the ribosomes. This is Small ribosomal subunit protein uS10 from Bartonella tribocorum (strain CIP 105476 / IBS 506).